The following is a 486-amino-acid chain: Probable transporter MCH1 (486 aa).

12 consecutive transmembrane segments (helical) span residues I31 to Y51, S68 to G88, Y95 to F115, E135 to L155, T174 to W194, V211 to F231, F268 to F288, F312 to S333, V349 to F369, V377 to V397, I409 to A429, and F457 to F477.

Belongs to the major facilitator superfamily.

It is found in the vacuole membrane. Its function is as follows. Probable transporter. The polypeptide is Probable transporter MCH1 (MCH1) (Yarrowia lipolytica (strain CLIB 122 / E 150) (Yeast)).